A 278-amino-acid polypeptide reads, in one-letter code: Large ribosomal subunit protein uL2 (278 aa).

Residues 218 to 278 (RPHNRGVVMN…IMRSRHQRKK (61 aa)) form a disordered region.

Belongs to the universal ribosomal protein uL2 family. As to quaternary structure, part of the 50S ribosomal subunit. Forms a bridge to the 30S subunit in the 70S ribosome.

One of the primary rRNA binding proteins. Required for association of the 30S and 50S subunits to form the 70S ribosome, for tRNA binding and peptide bond formation. It has been suggested to have peptidyltransferase activity; this is somewhat controversial. Makes several contacts with the 16S rRNA in the 70S ribosome. This is Large ribosomal subunit protein uL2 from Rhizobium etli (strain ATCC 51251 / DSM 11541 / JCM 21823 / NBRC 15573 / CFN 42).